We begin with the raw amino-acid sequence, 511 residues long: 2,3-bisphosphoglycerate-independent phosphoglycerate mutase (511 aa).

Mn(2+)-binding residues include D12 and S62. The Phosphoserine intermediate role is filled by S62. Substrate is bound by residues H123, 153 to 154 (RD), R185, R191, 260 to 263 (RPDR), and K333. Mn(2+)-binding residues include D400, H404, D441, H442, and H460.

It belongs to the BPG-independent phosphoglycerate mutase family. As to quaternary structure, monomer. Mn(2+) serves as cofactor.

The catalysed reaction is (2R)-2-phosphoglycerate = (2R)-3-phosphoglycerate. The protein operates within carbohydrate degradation; glycolysis; pyruvate from D-glyceraldehyde 3-phosphate: step 3/5. Catalyzes the interconversion of 2-phosphoglycerate and 3-phosphoglycerate. The polypeptide is 2,3-bisphosphoglycerate-independent phosphoglycerate mutase (Clostridium novyi (strain NT)).